Here is a 130-residue protein sequence, read N- to C-terminus: Early 3 receptor internalization and degradation beta protein (130 aa).

An N-terminal signal peptide occupies residues 1 to 19 (MKRSVIFVLLIFCALPVLC). Residues 53–77 (AWLYAIISVMVFCSTIFALAIYPYL) form a helical membrane-spanning segment. The segment at 122 to 125 (YFNL) is tyrosine-based sorting motif.

This sequence belongs to the adenoviridae E3_RID-beta family. As to quaternary structure, interacts with E3 RID-alpha and E3 CR1-alpha. Phosphorylated on serine. Post-translationally, O-glycosylated, but not N-glycosylated.

The protein localises to the host membrane. Its function is as follows. Prevents infected cell apoptosis induced by the host immune system. Acts by down-regulating a number of cell surface receptors in the tumor necrosis factor (TNF) receptor superfamily, namely FAS, TNFRSF10A/TRAIL receptor 1, and TNFRSF10B/TRAIL receptor 2. Down-regulation of these death receptors protects adenovirus-infected cells from apoptosis induced by the death receptor ligands Fas ligand and TRAIL. RID complex also down-regulates certain tyrosine kinase cell surface receptors, especially the epidermal growth factor receptor (EGFR). RID-mediated Fas and EGFR down-regulation occurs via endocytosis of the receptors into endosomes followed by transport to and degradation within lysosomes. The sequence is that of Early 3 receptor internalization and degradation beta protein from Human adenovirus C serotype 2 (HAdV-2).